We begin with the raw amino-acid sequence, 626 residues long: DNA-directed RNA polymerase subunit beta C-terminal section (626 aa).

Residues 287–307 (NTKSKNTGKGSKPPRASKAQN) form a disordered region.

Belongs to the RNA polymerase beta chain family. In plastids the minimal PEP RNA polymerase catalytic core is composed of four subunits: alpha, beta, beta', and beta''. When a (nuclear-encoded) sigma factor is associated with the core the holoenzyme is formed, which can initiate transcription.

Its subcellular location is the plastid. The protein localises to the chloroplast. The catalysed reaction is RNA(n) + a ribonucleoside 5'-triphosphate = RNA(n+1) + diphosphate. In terms of biological role, DNA-dependent RNA polymerase catalyzes the transcription of DNA into RNA using the four ribonucleoside triphosphates as substrates. The chain is DNA-directed RNA polymerase subunit beta C-terminal section (rpoB2) from Chlamydomonas reinhardtii (Chlamydomonas smithii).